Here is a 1898-residue protein sequence, read N- to C-terminus: Receptor-type tyrosine-protein phosphatase F (1898 aa).

Positions methionine 1–glycine 29 are cleaved as a signal peptide. Residues aspartate 30 to tryptophan 1254 lie on the Extracellular side of the membrane. 3 consecutive Ig-like C2-type domains span residues proline 33–serine 123, proline 135–tyrosine 224, and proline 232–threonine 314. An intrachain disulfide couples cysteine 54 to cysteine 107. Residue lysine 68–arginine 77 participates in heparin binding. The N-linked (GlcNAc...) asparagine glycan is linked to asparagine 117. An intrachain disulfide couples cysteine 156 to cysteine 207. Residues asparagine 250 and asparagine 295 are each glycosylated (N-linked (GlcNAc...) asparagine). An intrachain disulfide couples cysteine 253 to cysteine 298. Fibronectin type-III domains follow at residues proline 321–glutamine 411, proline 416–glycine 510, glutamine 514–serine 604, proline 609–aspartate 706, proline 711–alanine 810, valine 811–aspartate 904, phenylalanine 909–valine 1001, and phenylalanine 1005–aspartate 1089. Residues glycine 693–proline 712 are disordered. A glycan (N-linked (GlcNAc...) asparagine) is linked at asparagine 721. N-linked (GlcNAc...) asparagine glycans are attached at residues asparagine 941, asparagine 957, and asparagine 960. Residues valine 1255–phenylalanine 1275 form a helical membrane-spanning segment. Over lysine 1276–threonine 1898 the chain is Cytoplasmic. A Phosphoserine modification is found at serine 1296. 2 consecutive Tyrosine-protein phosphatase domains span residues phenylalanine 1343–alanine 1598 and methionine 1630–tyrosine 1889. Residues aspartate 1507, cysteine 1539–arginine 1545, and glutamine 1583 contribute to the substrate site. Catalysis depends on cysteine 1539, which acts as the Phosphocysteine intermediate. Cysteine 1830 (phosphocysteine intermediate) is an active-site residue.

Belongs to the protein-tyrosine phosphatase family. Receptor class 2A subfamily. Interacts with GRIP1. Interacts with PPFIA1, PPFIA2 and PPFIA3. Interacts with PTPRF. In terms of tissue distribution, expressed in the cell of the T lineage but not in cells of any other hemopoietic lineage.

The protein localises to the membrane. It catalyses the reaction O-phospho-L-tyrosyl-[protein] + H2O = L-tyrosyl-[protein] + phosphate. In terms of biological role, possible cell adhesion receptor. It possesses an intrinsic protein tyrosine phosphatase activity (PTPase) and dephosphorylates EPHA2 regulating its activity. The chain is Receptor-type tyrosine-protein phosphatase F (Ptprf) from Mus musculus (Mouse).